Reading from the N-terminus, the 76-residue chain is Acyl carrier protein (76 aa).

Residues 1–76 (MALLDDVKAV…DAIKYIENNA (76 aa)) enclose the Carrier domain. Serine 36 is modified (O-(pantetheine 4'-phosphoryl)serine).

The protein belongs to the acyl carrier protein (ACP) family. 4'-phosphopantetheine is transferred from CoA to a specific serine of apo-ACP by AcpS. This modification is essential for activity because fatty acids are bound in thioester linkage to the sulfhydryl of the prosthetic group.

The protein resides in the cytoplasm. The protein operates within lipid metabolism; fatty acid biosynthesis. Its function is as follows. Carrier of the growing fatty acid chain in fatty acid biosynthesis. This chain is Acyl carrier protein, found in Aliarcobacter butzleri (strain RM4018) (Arcobacter butzleri).